A 405-amino-acid chain; its full sequence is Putative phosphate permease PYRAB14010 (405 aa).

A run of 11 helical transmembrane segments spans residues 3-23, 44-64, 82-102, 114-134, 138-158, 181-201, 207-227, 264-284, 287-307, 329-349, and 384-404; these read MDPWLLLTLILGLAMAWAIGA, AVLIAGILEFTGAYFFGKTVT, VLVYGSLAALLGATIWLVIAT, IIGGIVGYGVVYAGLEIVNWG, SVVLSWILSPIVGAIFAFFIF, VWIGLAFVVIGTMFYIKVLHG, GVLKLGIPVGLVVFLITSMIL, VANAIGPVAAVYTIATMGMAG, VPVPRWILALGGLGIAIGVAT, FTIDFSAATVVLIASWLGMPI, and FVTVPVAGLISAIIFKILWIV.

This sequence belongs to the inorganic phosphate transporter (PiT) (TC 2.A.20) family.

Its subcellular location is the cell membrane. Its function is as follows. Potential transporter for phosphate. The chain is Putative phosphate permease PYRAB14010 from Pyrococcus abyssi (strain GE5 / Orsay).